Here is a 220-residue protein sequence, read N- to C-terminus: UPF0502 protein VV2_0756 (220 aa).

The protein belongs to the UPF0502 family.

The protein is UPF0502 protein VV2_0756 of Vibrio vulnificus (strain CMCP6).